We begin with the raw amino-acid sequence, 207 residues long: Thymidylate kinase (207 aa).

7–14 (GCEGSGKS) provides a ligand contact to ATP.

This sequence belongs to the thymidylate kinase family.

It carries out the reaction dTMP + ATP = dTDP + ADP. In terms of biological role, phosphorylation of dTMP to form dTDP in both de novo and salvage pathways of dTTP synthesis. This chain is Thymidylate kinase, found in Chlamydia caviae (strain ATCC VR-813 / DSM 19441 / 03DC25 / GPIC) (Chlamydophila caviae).